The chain runs to 488 residues: E3 ubiquitin-protein ligase TRIM39 (488 aa).

The RING-type zinc-finger motif lies at 29–70; it reads CSVCLEYLKEPVIIECGHNFCKACITRWWEDLERDFPCPVCR. The B box-type zinc finger occupies 102 to 143; the sequence is RDESLCSQHHEPLSLFCYEDQEAVCLICAISHTHRAHTVVPM. Zn(2+) contacts are provided by C107, H110, C129, and H135. Positions 181–250 form a coiled coil; it reads ELKRLVESRR…AHLAAEVEGK (70 aa). Interaction with CDKN1A regions lie at residues 268-307 and 359-488; these read KCEK…QLIA and TSGR…TDWE. In terms of domain architecture, B30.2/SPRY spans 289–484; it reads SHFPRQYFAL…NAAPLTIRPP (196 aa).

The protein belongs to the TRIM/RBCC family. Interacts with MOAP1. Interacts with CDKN1A. Autoubiquitinated.

The protein resides in the cytoplasm. It is found in the cytosol. The protein localises to the mitochondrion. It localises to the nucleus. The enzyme catalyses S-ubiquitinyl-[E2 ubiquitin-conjugating enzyme]-L-cysteine + [acceptor protein]-L-lysine = [E2 ubiquitin-conjugating enzyme]-L-cysteine + N(6)-ubiquitinyl-[acceptor protein]-L-lysine.. It participates in protein modification; protein ubiquitination. Functionally, E3 ubiquitin-protein ligase. May facilitate apoptosis by inhibiting APC/C-Cdh1-mediated poly-ubiquitination and subsequent proteasome-mediated degradation of the pro-apoptotic protein MOAP1. Regulates the G1/S transition of the cell cycle and DNA damage-induced G2 arrest by stabilizing CDKN1A/p21. Positively regulates CDKN1A/p21 stability by competing with DTL for CDKN1A/p21 binding, therefore disrupting DCX(DTL) E3 ubiquitin ligase complex-mediated CDKN1A/p21 ubiquitination and degradation. The chain is E3 ubiquitin-protein ligase TRIM39 (Trim39) from Rattus norvegicus (Rat).